The following is a 935-amino-acid chain: GPI ethanolamine phosphate transferase 1 (935 aa).

The Cytoplasmic segment spans residues 1-5 (MFGRL). Residues 6 to 26 (LLLGILFHVVFLKSIFDIYFV) traverse the membrane as a helical segment. Over 27–449 (TPLIHGMKQY…LQRYDWLLLR (423 aa)) the chain is Lumenal. 4 N-linked (GlcNAc...) asparagine glycosylation sites follow: N86, N134, N315, and N398. Residues 450–470 (SIVFFGYLSWIGYVICFVFSL) form a helical membrane-spanning segment. The Cytoplasmic portion of the chain corresponds to 471-483 (NIEPSSKIVKPVS). Residues 484 to 503 (VVKRVAFNIPFLLICIFFYI) traverse the membrane as a helical segment. Residues 504-509 (QSSPPF) are Lumenal-facing. The helical transmembrane segment at 510 to 530 (YYGYALFPTIFLQLIHSIFPN) threads the bilayer. Topologically, residues 531–547 (TKLGFKNFLTVAKQKHG) are cytoplasmic. The chain crosses the membrane as a helical span at residues 548–568 (FSLLKILFISLCILCLLQFIV). Residues 569-576 (YSYFHREG) lie on the Lumenal side of the membrane. The chain crosses the membrane as a helical span at residues 577–597 (FSVILMGLAAWPWLLHADYAF). Residues 598 to 600 (SHK) lie on the Cytoplasmic side of the membrane. The helical transmembrane segment at 601–621 (TISVSWSVLTSLLCFFTILPV) threads the bilayer. Residues 622-626 (NKKES) are Lumenal-facing. The chain crosses the membrane as a helical span at residues 627 to 647 (LLFIFAGGFAMSVAGVFYILY). The Cytoplasmic segment spans residues 648 to 663 (RRNQAFQYSSTVTNKQ). A helical transmembrane segment spans residues 664–684 (LVLQVLIIMATVPVTLKIADS). The Lumenal portion of the chain corresponds to 685 to 688 (LQRN). A helical transmembrane segment spans residues 689–709 (IAIPPILRLVAFGLFITSYII). Over 710 to 737 (PSHHIRSCKHYFLDRLAILFLTFSPTMC) the chain is Cytoplasmic. A helical transmembrane segment spans residues 738-758 (MLSISFEALFYVVLFITLGLW). Topologically, residues 759-792 (MELETELQKYTEQLHPEYSRKKDAKFHLSLSHIR) are lumenal. A helical membrane pass occupies residues 793–813 (ISLFFYIFINVAFFGTGNVAS). The Cytoplasmic segment spans residues 814–835 (LSTFALDSVKRFIPVFNPVTQG). Residues 836-856 (ALLMYTILVPFIALSAAFGIM) traverse the membrane as a helical segment. Over 857-865 (NKRLGGIQQ) the chain is Lumenal. The chain crosses the membrane as a helical span at residues 866–886 (VTFFLAVGMADIVTINFFYLV). The Cytoplasmic portion of the chain corresponds to 887 to 894 (KDEGSWKD). The chain crosses the membrane as a helical span at residues 895 to 915 (IGVSISHFCISNFLILFITAL). Residues 916-935 (EHASAILCKNITYTIHEKVN) are Lumenal-facing. N-linked (GlcNAc...) asparagine glycosylation is present at N925.

The protein belongs to the PIGG/PIGN/PIGO family. PIGN subfamily.

Its subcellular location is the endoplasmic reticulum membrane. It functions in the pathway glycolipid biosynthesis; glycosylphosphatidylinositol-anchor biosynthesis. Ethanolamine phosphate transferase involved in glycosylphosphatidylinositol-anchor biosynthesis. Transfers ethanolamine phosphate to the first alpha-1,4-linked mannose of the glycosylphosphatidylinositol precursor of GPI-anchor. The chain is GPI ethanolamine phosphate transferase 1 (its8) from Schizosaccharomyces pombe (strain 972 / ATCC 24843) (Fission yeast).